A 188-amino-acid chain; its full sequence is GTP cyclohydrolase 1 (188 aa).

Zn(2+) contacts are provided by Cys76, His79, and Cys148.

It belongs to the GTP cyclohydrolase I family. As to quaternary structure, homomer.

The enzyme catalyses GTP + H2O = 7,8-dihydroneopterin 3'-triphosphate + formate + H(+). The protein operates within cofactor biosynthesis; 7,8-dihydroneopterin triphosphate biosynthesis; 7,8-dihydroneopterin triphosphate from GTP: step 1/1. The sequence is that of GTP cyclohydrolase 1 from Pelotomaculum thermopropionicum (strain DSM 13744 / JCM 10971 / SI).